The chain runs to 131 residues: Histone H2A-beta (131 aa).

Serine 2 is subject to N-acetylserine. Residues lysine 5 and lysine 9 each carry the N6-acetyllysine modification. Glutamine 106 carries the N5-methylglutamine modification. Serine 128 carries the phosphoserine modification. The short motif at 128 to 129 is the [ST]-Q motif element; sequence SQ.

This sequence belongs to the histone H2A family. The nucleosome is a histone octamer containing two molecules each of H2A, H2B, H3 and H4 assembled in one H3-H4 heterotetramer and two H2A-H2B heterodimers. The octamer wraps approximately 147 bp of DNA. In terms of processing, phosphorylated to form H2AS128ph (gamma-H2A) in response to DNA double-strand breaks (DSBs) generated by exogenous genotoxic agents and by stalled replication forks. Phosphorylation is dependent on the DNA damage checkpoint kinases rad3/ATR and tel1/ATM, spreads on either side of a detected DSB site and may mark the surrounding chromatin for recruitment of proteins required for DNA damage signaling and repair. Gamma-H2A is required for recruiting crb2, a modulator of DNA damage checkpoint signaling, to DSB sites. Gamma-H2A is removed from the DNA prior to the strand invasion-primer extension step of the repair process and subsequently dephosphorylated. Dephosphorylation is necessary for efficient recovery from the DNA damage checkpoint. Post-translationally, acetylated by esa1 to form H2AK4ac and H2AK7ac.

It is found in the nucleus. The protein localises to the chromosome. In terms of biological role, core component of nucleosome which plays a central role in DNA double strand break (DSB) repair. Nucleosomes wrap and compact DNA into chromatin, limiting DNA accessibility to the cellular machineries which require DNA as a template. Histones thereby play a central role in transcription regulation, DNA repair, DNA replication and chromosomal stability. DNA accessibility is regulated via a complex set of post-translational modifications of histones, also called histone code, and nucleosome remodeling. This is Histone H2A-beta (hta2) from Schizosaccharomyces pombe (strain 972 / ATCC 24843) (Fission yeast).